The following is a 786-amino-acid chain: Pentatricopeptide repeat-containing protein At2g22070 (786 aa).

PPR repeat units follow at residues 48–78 (SVYLMNNLMNVYSKTGYALHARKLFDEMPLR), 79–109 (TAFSWNTVLSAYSKRGDMDSTCEFFDQLPQR), 110–144 (DSVSWTTMIVGYKNIGQYHKAIRVMGDMVKEGIEP), 145–179 (TQFTLTNVLASVAATRCMETGKKVHSFIVKLGLRG), 180–214 (NVSVSNSLLNMYAKCGDPMMAKFVFDRMVVRDISS), 215–241 (WNAMIALHMQVGQMDLAMAQFEQMAER), 242–276 (DIVTWNSMISGFNQRGYDLRALDIFSKMLRDSLLS), 278–312 (DRFTLASVLSACANLEKLCIGKQIHSHIVTTGFDI), 313–347 (SGIVLNALISMYSRCGGVETARRLIEQRGTKDLKI), 350–376 (FTALLDGYIKLGDMNQAKNIFVSLKDR), 377–411 (DVVAWTAMIVGYEQHGSYGEAINLFRSMVGGGQRP), 412–446 (NSYTLAAMLSVASSLASLSHGKQIHGSAVKSGEIY), 447–477 (SVSVSNALITMYAKAGNITSASRAFDLIRCE), 479–513 (DTVSWTSMIIALAQHGHAEEALELFETMLMEGLRP), 514–548 (DHITYVGVFSACTHAGLVNQGRQYFDMMKDVDKII), and 550–580 (TLSHYACMVDLFGRAGLLQEAQEFIEKMPIE). A type E motif region spans residues 585 to 660 (TWGSLLSACR…EQGFSWIEVK (76 aa)). Residues 661–691 (HKVHVFGVEDGTHPEKNEIYMTMKKIWDEIK) form a type E(+) motif region. Residues 692–786 (KMGYVPDTAS…DGFCSCRDYW (95 aa)) form a type DYW motif region.

The protein belongs to the PPR family. PCMP-H subfamily.

The protein is Pentatricopeptide repeat-containing protein At2g22070 (PCMP-H41) of Arabidopsis thaliana (Mouse-ear cress).